The sequence spans 32 residues: Photosystem II reaction center protein T (32 aa).

A helical transmembrane segment spans residues Ser3–Phe23.

Belongs to the PsbT family. PSII is composed of 1 copy each of membrane proteins PsbA, PsbB, PsbC, PsbD, PsbE, PsbF, PsbH, PsbI, PsbJ, PsbK, PsbL, PsbM, PsbT, PsbX, PsbY, PsbZ, Psb30/Ycf12, peripheral proteins PsbO, CyanoQ (PsbQ), PsbU, PsbV and a large number of cofactors. It forms dimeric complexes.

It localises to the cellular thylakoid membrane. Its function is as follows. Found at the monomer-monomer interface of the photosystem II (PS II) dimer, plays a role in assembly and dimerization of PSII. PSII is a light-driven water plastoquinone oxidoreductase, using light energy to abstract electrons from H(2)O, generating a proton gradient subsequently used for ATP formation. This Cyanothece sp. (strain PCC 7425 / ATCC 29141) protein is Photosystem II reaction center protein T.